We begin with the raw amino-acid sequence, 331 residues long: Glyceraldehyde-3-phosphate dehydrogenase 2 (331 aa).

NAD(+) contacts are provided by residues 11–12 (RI), Asp-33, and Arg-78. Residues 148–150 (SCT), Thr-179, 208–209 (TG), and Arg-231 each bind D-glyceraldehyde 3-phosphate. Residue Cys-149 is the Nucleophile of the active site. Asn-313 serves as a coordination point for NAD(+).

It belongs to the glyceraldehyde-3-phosphate dehydrogenase family. As to quaternary structure, homotetramer.

It is found in the cytoplasm. It carries out the reaction D-glyceraldehyde 3-phosphate + phosphate + NAD(+) = (2R)-3-phospho-glyceroyl phosphate + NADH + H(+). The protein operates within carbohydrate degradation; glycolysis; pyruvate from D-glyceraldehyde 3-phosphate: step 1/5. The polypeptide is Glyceraldehyde-3-phosphate dehydrogenase 2 (GAP2) (Kluyveromyces marxianus (Yeast)).